The sequence spans 250 residues: tRNA (guanine-N(7)-)-methyltransferase (250 aa).

The span at 1–10 (MTPDDPRDAS) shows a compositional bias: basic and acidic residues. Residues 1–30 (MTPDDPRDASDASLADATADSASRGHGSFF) are disordered. Over residues 11 to 24 (DASLADATADSASR) the composition is skewed to low complexity. S-adenosyl-L-methionine contacts are provided by E79, E104, D131, and D153. D153 is a catalytic residue. Substrate is bound by residues K157 and D189.

Belongs to the class I-like SAM-binding methyltransferase superfamily. TrmB family.

It catalyses the reaction guanosine(46) in tRNA + S-adenosyl-L-methionine = N(7)-methylguanosine(46) in tRNA + S-adenosyl-L-homocysteine. Its pathway is tRNA modification; N(7)-methylguanine-tRNA biosynthesis. Catalyzes the formation of N(7)-methylguanine at position 46 (m7G46) in tRNA. The protein is tRNA (guanine-N(7)-)-methyltransferase of Rhodopseudomonas palustris (strain BisA53).